Consider the following 314-residue polypeptide: UDP-N-acetylenolpyruvoylglucosamine reductase (314 aa).

Residues 25 to 191 (KIGGPADLFA…VRVGMELRWG (167 aa)) enclose the FAD-binding PCMH-type domain. R170 is an active-site residue. The Proton donor role is filled by S220. E291 is an active-site residue.

The protein belongs to the MurB family. FAD serves as cofactor.

It localises to the cytoplasm. It catalyses the reaction UDP-N-acetyl-alpha-D-muramate + NADP(+) = UDP-N-acetyl-3-O-(1-carboxyvinyl)-alpha-D-glucosamine + NADPH + H(+). It participates in cell wall biogenesis; peptidoglycan biosynthesis. Its function is as follows. Cell wall formation. The chain is UDP-N-acetylenolpyruvoylglucosamine reductase from Heliobacterium modesticaldum (strain ATCC 51547 / Ice1).